Reading from the N-terminus, the 428-residue chain is Enolase (428 aa).

Residue glutamine 163 coordinates (2R)-2-phosphoglycerate. Residue glutamate 205 is the Proton donor of the active site. Residues aspartate 242, glutamate 285, and aspartate 312 each contribute to the Mg(2+) site. Lysine 337, arginine 366, serine 367, and lysine 388 together coordinate (2R)-2-phosphoglycerate. The active-site Proton acceptor is the lysine 337.

Belongs to the enolase family. The cofactor is Mg(2+).

It localises to the cytoplasm. The protein resides in the secreted. The protein localises to the cell surface. It carries out the reaction (2R)-2-phosphoglycerate = phosphoenolpyruvate + H2O. It participates in carbohydrate degradation; glycolysis; pyruvate from D-glyceraldehyde 3-phosphate: step 4/5. Catalyzes the reversible conversion of 2-phosphoglycerate (2-PG) into phosphoenolpyruvate (PEP). It is essential for the degradation of carbohydrates via glycolysis. The sequence is that of Enolase from Brevibacillus brevis (strain 47 / JCM 6285 / NBRC 100599).